A 578-amino-acid chain; its full sequence is Triokinase/FMN cyclase (578 aa).

The region spanning 9 to 336 (SVAGCADDAL…IDAETTASAW (328 aa)) is the DhaK domain. Residues 56–59 (GSGH), Lys-109, and Asp-114 each bind dihydroxyacetone. The active-site Tele-hemiaminal-histidine intermediate is His-221. Position 350 is a phosphoserine (Ser-350). In terms of domain architecture, DhaL spans 372-571 (KQMVLVLEWV…AAAILRAILE (200 aa)). ATP-binding positions include 401-404 (DGDC), 446-447 (SS), Gly-486, and 494-495 (TM). Residues Ser-511 and Ser-545 each carry the phosphoserine modification. ATP is bound at residue 556 to 558 (DPG).

In terms of assembly, homodimer. Interacts with IFIH1 (via the CARD domains), the interaction is inhibited by viral infection. The cofactor is Mg(2+). Mn(2+) is required as a cofactor. It depends on Co(2+) as a cofactor.

It catalyses the reaction dihydroxyacetone + ATP = dihydroxyacetone phosphate + ADP + H(+). The catalysed reaction is D-glyceraldehyde + ATP = D-glyceraldehyde 3-phosphate + ADP + H(+). The enzyme catalyses FAD = riboflavin cyclic-4',5'-phosphate + AMP + H(+). With respect to regulation, each activity is inhibited by the substrate(s) of the other. Functionally, catalyzes both the phosphorylation of dihydroxyacetone and of glyceraldehyde, and the splitting of ribonucleoside diphosphate-X compounds among which FAD is the best substrate. Represses IFIH1-mediated cellular antiviral response. This chain is Triokinase/FMN cyclase (TKFC), found in Bos taurus (Bovine).